Reading from the N-terminus, the 142-residue chain is MYDNSMKIEFISKSQNESFARVSVAAFVSQLDPTLDELTDVKTAVSEAVTNSIIHGYENKEGIVKIEASIKGRELILIVEDNGIGIENIDMAMQPLYTSKPELERSGMGFTVMETFMDSLQVESEKNKGTRLIMKKVFNSLS.

It belongs to the anti-sigma-factor family.

It carries out the reaction L-seryl-[protein] + ATP = O-phospho-L-seryl-[protein] + ADP + H(+). The enzyme catalyses L-threonyl-[protein] + ATP = O-phospho-L-threonyl-[protein] + ADP + H(+). Its function is as follows. Binds to sigma F and blocks its ability to form an RNA polymerase holoenzyme (E-sigma F). Phosphorylates SpoIIAA on a serine residue. This phosphorylation may enable SpoIIAA to act as an anti-anti-sigma factor that counteracts SpoIIAB and thus releases sigma F from inhibition. In Clostridium kluyveri (strain NBRC 12016), this protein is Anti-sigma F factor.